The following is a 78-amino-acid chain: Sperm-specific protein Phi-0 (78 aa).

Composition is skewed to basic residues over residues 1 to 21, 31 to 57, and 64 to 78; these read MVARRQTKKARKPAARRRSAA, AASRRRPKSAKKAKPAARRRSSVKPKA, and VRRRSRRIRRASVSK. The disordered stretch occupies residues 1–78; that stretch reads MVARRQTKKA…RRIRRASVSK (78 aa).

It localises to the nucleus. The protein localises to the chromosome. Functionally, involved in nuclear basic protein transition: histones are replaced by spermatid specific proteins which are themselves replaced by protamines in late spermatids. This Holothuria tubulosa (Tubular sea cucumber) protein is Sperm-specific protein Phi-0.